The primary structure comprises 208 residues: MCRGIIGRKIGMTGVFSDQGEYVPVTVIEAGPCVVTQIKTVETDGYSALQLGFLEKKASKINKPLAGHFKKSGGVGFAYVREMAVDDPSAYTLGQVINAELFSAGEKVHVAGLMKGRGFAGVVKRHGFAGGKDTHGCHSHRVPGSIGTSAWPSKVFKGRKLPGRYGNTRITTKNLKIFDIQPETNLILIKGAVPGSNNGLVEIRKINA.

The protein belongs to the universal ribosomal protein uL3 family. As to quaternary structure, part of the 50S ribosomal subunit. Forms a cluster with proteins L14 and L19.

In terms of biological role, one of the primary rRNA binding proteins, it binds directly near the 3'-end of the 23S rRNA, where it nucleates assembly of the 50S subunit. This Desulfosudis oleivorans (strain DSM 6200 / JCM 39069 / Hxd3) (Desulfococcus oleovorans) protein is Large ribosomal subunit protein uL3.